Here is a 1377-residue protein sequence, read N- to C-terminus: DNA-directed RNA polymerase subunit beta (1377 aa).

Belongs to the RNA polymerase beta chain family. The RNAP catalytic core consists of 2 alpha, 1 beta, 1 beta' and 1 omega subunit. When a sigma factor is associated with the core the holoenzyme is formed, which can initiate transcription.

It catalyses the reaction RNA(n) + a ribonucleoside 5'-triphosphate = RNA(n+1) + diphosphate. Functionally, DNA-dependent RNA polymerase catalyzes the transcription of DNA into RNA using the four ribonucleoside triphosphates as substrates. This Azoarcus sp. (strain BH72) protein is DNA-directed RNA polymerase subunit beta.